Reading from the N-terminus, the 92-residue chain is Protein S100-A12 (92 aa).

EF-hand domains lie at 13–48 (NIFH…IKNI) and 49–84 (KDKA…ALKA). H16 is a Cu cation binding site. Residue H16 coordinates Zn(2+). Residues S19, K22, and H24 each coordinate Ca(2+). Residue D26 participates in Cu cation binding. D26 contributes to the Zn(2+) binding site. Residues T27 and E32 each coordinate Ca(2+). The interval 38-53 (TKELANTIKNIKDKAV) is hinge domain. Ca(2+) is bound by residues D62, N64, D66, Q68, and E73. 2 residues coordinate Cu cation: H86 and H90. Residues H86 and H90 each contribute to the Zn(2+) site.

It belongs to the S-100 family. In terms of assembly, homodimer. Homooligomer (tetramer or hexamer) in the presence of calcium, zinc and copper ions. Interacts with AGER and both calcium and zinc are essential for the interaction. Interacts with CACYBP in a calcium-dependent manner. In terms of tissue distribution, predominantly expressed by neutrophils, monocytes and activated macrophages. Expressed by eosinophils and macrophages in asthmatic airways in regions where mast cells accumulate. Found in high concentrations in the serum of patients suffering from various inflammatory disorders, such as rheumatoid arthritis, psoriatic arthritis, Crohn's disease, ulcerative colitis, and Kawasaki disease.

Its subcellular location is the secreted. The protein resides in the cytoplasm. It is found in the cytoskeleton. It localises to the cell membrane. Its function is as follows. S100A12 is a calcium-, zinc- and copper-binding protein which plays a prominent role in the regulation of inflammatory processes and immune response. Its pro-inflammatory activity involves recruitment of leukocytes, promotion of cytokine and chemokine production, and regulation of leukocyte adhesion and migration. Acts as an alarmin or a danger associated molecular pattern (DAMP) molecule and stimulates innate immune cells via binding to receptor for advanced glycation endproducts (AGER). Binding to AGER activates the MAP-kinase and NF-kappa-B signaling pathways leading to production of pro-inflammatory cytokines and up-regulation of cell adhesion molecules ICAM1 and VCAM1. Acts as a monocyte and mast cell chemoattractant. Can stimulate mast cell degranulation and activation which generates chemokines, histamine and cytokines inducing further leukocyte recruitment to the sites of inflammation. Can inhibit the activity of matrix metalloproteinases; MMP2, MMP3 and MMP9 by chelating Zn(2+) from their active sites. Possesses filariacidal and filariastatic activity. Calcitermin possesses antifungal activity against C.albicans and is also active against E.coli and P.aeruginosa but not L.monocytogenes and S.aureus. This chain is Protein S100-A12 (S100A12), found in Homo sapiens (Human).